We begin with the raw amino-acid sequence, 149 residues long: Calmodulin-1 (149 aa).

The residue at position 2 (A2) is an N-acetylalanine. EF-hand domains follow at residues 8–43 (DQIS…LGQN), 44–79 (PTEA…KMKD), 81–116 (DSEE…LGEK), and 117–149 (LTDE…MMAK). Residues D21, D23, D25, C27, E32, D57, D59, N61, T63, E68, D94, D96, N98, and E105 each contribute to the Ca(2+) site. K116 bears the N6,N6,N6-trimethyllysine mark. Residues D130, D132, D134, Q136, and E141 each coordinate Ca(2+).

Belongs to the calmodulin family.

Calmodulin mediates the control of a large number of enzymes, ion channels and other proteins by Ca(2+). Among the enzymes to be stimulated by the calmodulin-Ca(2+) complex are a number of protein kinases and phosphatases. In Petunia hybrida (Petunia), this protein is Calmodulin-1 (CAM81).